We begin with the raw amino-acid sequence, 317 residues long: Alkylsulfatase (317 aa).

His78 provides a ligand contact to substrate. Residues His105 and Asp107 each contribute to the Fe cation site. Val108 serves as a coordination point for substrate. Thr132 contributes to the 2-oxoglutarate binding site. His261 is a binding site for Fe cation. Positions 272 and 276 each coordinate 2-oxoglutarate.

This sequence belongs to the TfdA dioxygenase family. In terms of assembly, homotetramer. Fe(2+) is required as a cofactor.

Functionally, alpha-ketoglutarate-dependent dioxygenase that in vitro catalyzes the oxygenolytic release of sulfite from hexylsulfate. In Acinetobacter baylyi (strain ATCC 33305 / BD413 / ADP1), this protein is Alkylsulfatase.